We begin with the raw amino-acid sequence, 709 residues long: Probable lanosterol 14-alpha demethylase (709 aa).

A heme-binding site is contributed by Cys425.

The protein belongs to the cytochrome P450 family. Heme serves as cofactor.

Its subcellular location is the membrane. The catalysed reaction is a 14alpha-methyl steroid + 3 reduced [NADPH--hemoprotein reductase] + 3 O2 = a Delta(14) steroid + formate + 3 oxidized [NADPH--hemoprotein reductase] + 4 H2O + 4 H(+). It functions in the pathway steroid biosynthesis; zymosterol biosynthesis; zymosterol from lanosterol: step 1/6. Catalyzes the 14-alpha demethylation of obtusifoliol to 4 alpha-methyl-5 alpha-ergosta-8,14,24(28)-trien-3 beta-ol. In Acanthamoeba polyphaga (Amoeba), this protein is Probable lanosterol 14-alpha demethylase.